The sequence spans 299 residues: Oxygen-dependent coproporphyrinogen-III oxidase (299 aa).

Ser-92 contacts substrate. A divalent metal cation-binding residues include His-96 and His-106. His-106 (proton donor) is an active-site residue. Substrate is bound at residue 108 to 110; that stretch reads NVR. His-145 and His-175 together coordinate a divalent metal cation. The tract at residues 239–274 is important for dimerization; that stretch reads YVEFNLVYDRGTLFGLQSGGRAESILMSLPPQVRWE. 257–259 contributes to the substrate binding site; sequence GGR.

This sequence belongs to the aerobic coproporphyrinogen-III oxidase family. Homodimer. A divalent metal cation is required as a cofactor.

The protein localises to the cytoplasm. It catalyses the reaction coproporphyrinogen III + O2 + 2 H(+) = protoporphyrinogen IX + 2 CO2 + 2 H2O. Its pathway is porphyrin-containing compound metabolism; protoporphyrin-IX biosynthesis; protoporphyrinogen-IX from coproporphyrinogen-III (O2 route): step 1/1. Its function is as follows. Involved in the heme biosynthesis. Catalyzes the aerobic oxidative decarboxylation of propionate groups of rings A and B of coproporphyrinogen-III to yield the vinyl groups in protoporphyrinogen-IX. This Xanthomonas campestris pv. campestris (strain 8004) protein is Oxygen-dependent coproporphyrinogen-III oxidase.